The chain runs to 97 residues: Large ribosomal subunit protein eL21 (97 aa).

A compositionally biased stretch (basic residues) spans 1 to 24 (MVQKPHSFRRKTRKKLRKHPRRRG). Positions 1–25 (MVQKPHSFRRKTRKKLRKHPRRRGL) are disordered.

Belongs to the eukaryotic ribosomal protein eL21 family.

This is Large ribosomal subunit protein eL21 (rpl21e) from Pyrococcus horikoshii (strain ATCC 700860 / DSM 12428 / JCM 9974 / NBRC 100139 / OT-3).